A 188-amino-acid chain; its full sequence is dCTP deaminase (188 aa).

DCTP-binding positions include 111 to 116 (KSTYAR), 135 to 137 (TLE), Gln-156, Tyr-170, and Gln-180. Residue Glu-137 is the Proton donor/acceptor of the active site.

This sequence belongs to the dCTP deaminase family. Homotrimer.

It carries out the reaction dCTP + H2O + H(+) = dUTP + NH4(+). It functions in the pathway pyrimidine metabolism; dUMP biosynthesis; dUMP from dCTP (dUTP route): step 1/2. In terms of biological role, catalyzes the deamination of dCTP to dUTP. The chain is dCTP deaminase from Laribacter hongkongensis (strain HLHK9).